We begin with the raw amino-acid sequence, 720 residues long: Fatty acid CoA ligase Acsl3 (720 aa).

Residues 21-41 (ILLYFIHFIISLYTILTYIPF) form a helical; Signal-anchor for type III membrane protein membrane-spanning segment. Topologically, residues 42–720 (YFLCESKQEK…ADIERMYGRK (679 aa)) are cytoplasmic. S683 is modified (phosphoserine).

The protein belongs to the ATP-dependent AMP-binding enzyme family. Mg(2+) is required as a cofactor. Predominantly expressed in the brain, and to a much lesser extent, in lung, adrenal gland, kidney, small intestine, and adipose tissue but not detected in heart or liver.

The protein resides in the mitochondrion outer membrane. Its subcellular location is the peroxisome membrane. It localises to the microsome membrane. The protein localises to the endoplasmic reticulum membrane. It catalyses the reaction a long-chain fatty acid + ATP + CoA = a long-chain fatty acyl-CoA + AMP + diphosphate. It carries out the reaction (5Z,8Z,11Z,14Z)-eicosatetraenoate + ATP + CoA = (5Z,8Z,11Z,14Z)-eicosatetraenoyl-CoA + AMP + diphosphate. The catalysed reaction is a medium-chain fatty acid + ATP + CoA = a medium-chain fatty acyl-CoA + AMP + diphosphate. The enzyme catalyses 15-hydroxy-(5Z,8Z,11Z,13E)-eicosatetraenoate + ATP + CoA = 15-hydroxy-(5Z,8Z,11Z,13E)-eicosatetraenoyl-CoA + AMP + diphosphate. It catalyses the reaction 12-hydroxy-(5Z,8Z,10E,14Z)-eicosatetraenoate + ATP + CoA = 12-hydroxy-(5Z,8Z,10E,14Z)-eicosatetraenoyl-CoA + AMP + diphosphate. It carries out the reaction 5-hydroxy-(6E,8Z,11Z,14Z)-eicosatetraenoate + ATP + CoA = 5-hydroxy-(6E,8Z,11Z,14Z)-eicosatetraenoyl-CoA + AMP + diphosphate. The catalysed reaction is 14,15-epoxy-(5Z,8Z,11Z)-eicosatrienoate + ATP + CoA = 14,15-epoxy-(5Z,8Z,11Z)-eicosatrienoyl-CoA + AMP + diphosphate. The enzyme catalyses 11,12-epoxy-(5Z,8Z,14Z)-eicosatrienoate + ATP + CoA = 11,12-epoxy-(5Z,8Z,14Z)-eicosatrienoyl-CoA + AMP + diphosphate. It catalyses the reaction (E)-hexadec-2-enoate + ATP + CoA = (2E)-hexadecenoyl-CoA + AMP + diphosphate. It carries out the reaction hexadecanoate + ATP + CoA = hexadecanoyl-CoA + AMP + diphosphate. The catalysed reaction is tetradecanoate + ATP + CoA = tetradecanoyl-CoA + AMP + diphosphate. The enzyme catalyses dodecanoate + ATP + CoA = dodecanoyl-CoA + AMP + diphosphate. It catalyses the reaction octadecanoate + ATP + CoA = octadecanoyl-CoA + AMP + diphosphate. It carries out the reaction eicosanoate + ATP + CoA = eicosanoyl-CoA + AMP + diphosphate. The catalysed reaction is (9Z)-octadecenoate + ATP + CoA = (9Z)-octadecenoyl-CoA + AMP + diphosphate. The enzyme catalyses (9Z)-hexadecenoate + ATP + CoA = (9Z)-hexadecenoyl-CoA + AMP + diphosphate. It catalyses the reaction (9Z,12Z)-octadecadienoate + ATP + CoA = (9Z,12Z)-octadecadienoyl-CoA + AMP + diphosphate. It carries out the reaction (9Z,12Z,15Z)-octadecatrienoate + ATP + CoA = (9Z,12Z,15Z)-octadecatrienoyl-CoA + AMP + diphosphate. The catalysed reaction is (4Z,7Z,10Z,13Z,16Z,19Z)-docosahexaenoate + ATP + CoA = (4Z,7Z,10Z,13Z,16Z,19Z)-docosahexaenoyl-CoA + AMP + diphosphate. The enzyme catalyses (5Z,8Z,11Z,14Z,17Z)-eicosapentaenoate + ATP + CoA = (5Z,8Z,11Z,14Z,17Z)-eicosapentaenoyl-CoA + AMP + diphosphate. It catalyses the reaction a fatty acid + ATP + CoA = a fatty acyl-CoA + AMP + diphosphate. In terms of biological role, catalyzes the conversion of long-chain fatty acids to their active form acyl-CoA for both synthesis of cellular lipids, and degradation via beta-oxidation. ACSL3 is required for the incorporation of fatty acids into phosphatidylcholine, the major phospholipid located on the surface of VLDL (very low density lipoproteins). Has mainly an anabolic role in energy metabolism. Mediates hepatic lipogenesis. Preferentially uses myristate, laurate, arachidonate and eicosapentaenoate as substrates. Both isoforms exhibit the same level of activity. This chain is Fatty acid CoA ligase Acsl3, found in Rattus norvegicus (Rat).